The sequence spans 196 residues: Corticoliberin (196 aa).

Residues 1-24 (MRLPLLLSAGVLLVVSLPCPPCRA) form the signal peptide. The propeptide occupies 25 to 153 (LLSRGPIPGA…RQETPERERR (129 aa)). Residues 122–158 (PRRQLDSPAGPAERGEENALGSRQETPERERRSEEPP) form a disordered region. Over residues 146 to 156 (ETPERERRSEE) the composition is skewed to basic and acidic residues. Isoleucine amide is present on isoleucine 194.

Belongs to the sauvagine/corticotropin-releasing factor/urotensin I family. Interacts (via C-terminus) with CRFR1 (via N-terminal extracellular domain). Produced by the hypothalamus.

Its subcellular location is the secreted. Hormone regulating the release of corticotropin from pituitary gland. Induces NLRP6 in intestinal epithelial cells, hence may influence gut microbiota profile. The sequence is that of Corticoliberin (CRH) from Canis lupus familiaris (Dog).